The primary structure comprises 387 residues: Putative transmembrane protein At3g54730 (387 aa).

Positions 10-25 (PAPPLLLPSPNPPPCA) are enriched in pro residues. The tract at residues 10–45 (PAPPLLLPSPNPPPCALPQDLTSLVSPSEPPDPPDP) is disordered. 8 consecutive transmembrane segments (helical) span residues 97-117 (VFPL…HPLV), 128-148 (GSNF…ILQF), 154-174 (VMIS…MILL), 186-206 (VLFS…VGLI), 221-241 (IQKL…FLEI), 292-312 (SWCF…YPLE), 335-355 (FSTI…FIFF), and 362-382 (PFVA…LNHF).

The protein resides in the membrane. The sequence is that of Putative transmembrane protein At3g54730 from Arabidopsis thaliana (Mouse-ear cress).